We begin with the raw amino-acid sequence, 203 residues long: Tic20 family protein Ycf60 (203 aa).

5 consecutive transmembrane segments (helical) span residues 2–22 (IRLFTFGIITMLVLVIARLAI), 51–71 (IIPYYLPLFEGLQNFGQYVLP), 84–104 (ILLPMLIFYMNHAILGLVTFF), 131–151 (ILLFLVGSLFGAIFRAFPIEF), and 153–173 (ISFIGLTVCNMMFWFILSTIT).

This sequence belongs to the Tic20 family.

The protein localises to the plastid. It localises to the chloroplast membrane. The sequence is that of Tic20 family protein Ycf60 (ycf60) from Porphyra purpurea (Red seaweed).